A 155-amino-acid polypeptide reads, in one-letter code: MLKKKKTEVYALGEHISMSADKARRVIDQIRGRSYEETLMILELMPYRACYPILKLVYSAAANASYNMGSSETNLVISKAEVNEGTTVKKLKPRARGRSFPIKRSTCHITIVMKDISLDDEYGEMSSLKKTRWKKKSTAMTYRDMYNSGGLWDKK.

This sequence belongs to the universal ribosomal protein uL22 family. In terms of assembly, part of the 50S ribosomal subunit.

Its subcellular location is the plastid. It localises to the chloroplast. Functionally, this protein binds specifically to 23S rRNA. The globular domain of the protein is located near the polypeptide exit tunnel on the outside of the subunit, while an extended beta-hairpin is found that lines the wall of the exit tunnel in the center of the 70S ribosome. The polypeptide is Large ribosomal subunit protein uL22c (rpl22) (Solanum bulbocastanum (Wild potato)).